The chain runs to 189 residues: Vacuolar iron transporter homolog 2 (189 aa).

Over M1 to A10 the chain is Cytoplasmic. The chain crosses the membrane as a helical span at residues V11–V31. Residues N32–M38 lie on the Vacuolar side of the membrane. The helical transmembrane segment at L39–V59 threads the bilayer. Residues S60–A97 lie on the Cytoplasmic side of the membrane. Residues F98 to I118 form a helical membrane-spanning segment. Residues K119–R124 lie on the Vacuolar side of the membrane. A helical membrane pass occupies residues V125–Y145. Topologically, residues L146–L159 are cytoplasmic. Residues L160–F180 traverse the membrane as a helical segment. The Vacuolar segment spans residues H181 to A189.

This sequence belongs to the CCC1 family.

It is found in the vacuole membrane. It carries out the reaction Fe(2+)(in) = Fe(2+)(out). Functionally, probable vacuolar iron transporter that may be involved in the regulation of iron distribution throughout the plant. The chain is Vacuolar iron transporter homolog 2 from Oryza sativa subsp. japonica (Rice).